We begin with the raw amino-acid sequence, 189 residues long: Ribonuclease M5 (189 aa).

Positions 8–91 (KEIIVVEGKD…AFLPKEEALA (84 aa)) constitute a Toprim domain. Positions 14, 60, and 62 each coordinate Mg(2+).

Belongs to the ribonuclease M5 family. Mg(2+) serves as cofactor.

It is found in the cytoplasm. The catalysed reaction is Endonucleolytic cleavage of RNA, removing 21 and 42 nucleotides, respectively, from the 5'- and 3'-termini of a 5S-rRNA precursor.. Required for correct processing of both the 5' and 3' ends of 5S rRNA precursor. Cleaves both sides of a double-stranded region yielding mature 5S rRNA in one step. The protein is Ribonuclease M5 of Bacillus cereus (strain ATCC 14579 / DSM 31 / CCUG 7414 / JCM 2152 / NBRC 15305 / NCIMB 9373 / NCTC 2599 / NRRL B-3711).